Consider the following 480-residue polypeptide: UDP-N-acetylmuramate--L-alanine ligase (480 aa).

Residue 115-121 participates in ATP binding; that stretch reads GTHGKTT.

This sequence belongs to the MurCDEF family.

It localises to the cytoplasm. It catalyses the reaction UDP-N-acetyl-alpha-D-muramate + L-alanine + ATP = UDP-N-acetyl-alpha-D-muramoyl-L-alanine + ADP + phosphate + H(+). Its pathway is cell wall biogenesis; peptidoglycan biosynthesis. In terms of biological role, cell wall formation. The sequence is that of UDP-N-acetylmuramate--L-alanine ligase from Gluconacetobacter diazotrophicus (strain ATCC 49037 / DSM 5601 / CCUG 37298 / CIP 103539 / LMG 7603 / PAl5).